The primary structure comprises 942 residues: DNA mismatch repair protein MSH2 (942 aa).

Position 667–674 (glycine 667–serine 674) interacts with ATP.

The protein belongs to the DNA mismatch repair MutS family. In terms of assembly, heterodimer of MSH2 and MSH6 (GTBP).

The protein localises to the nucleus. Its function is as follows. Involved in postreplication mismatch repair. Binds specifically to DNA containing mismatched nucleotides thus providing a target for the excision repair processes characteristic of postreplication mismatch repair. In Zea mays (Maize), this protein is DNA mismatch repair protein MSH2 (MUS1).